A 393-amino-acid polypeptide reads, in one-letter code: S-adenosylmethionine synthase (393 aa).

H17 is an ATP binding site. D19 provides a ligand contact to Mg(2+). E45 is a binding site for K(+). Residues E58 and Q106 each coordinate L-methionine. The interval 106-116 is flexible loop; sequence QSAHIAQGVDA. Residues 171-173, 237-238, D246, 252-253, A269, and K273 contribute to the ATP site; these read DAK, KF, and RK. L-methionine is bound at residue D246. K277 contacts L-methionine.

The protein belongs to the AdoMet synthase family. In terms of assembly, homotetramer; dimer of dimers. Mg(2+) serves as cofactor. The cofactor is K(+).

The protein localises to the cytoplasm. It catalyses the reaction L-methionine + ATP + H2O = S-adenosyl-L-methionine + phosphate + diphosphate. It functions in the pathway amino-acid biosynthesis; S-adenosyl-L-methionine biosynthesis; S-adenosyl-L-methionine from L-methionine: step 1/1. Its function is as follows. Catalyzes the formation of S-adenosylmethionine (AdoMet) from methionine and ATP. The overall synthetic reaction is composed of two sequential steps, AdoMet formation and the subsequent tripolyphosphate hydrolysis which occurs prior to release of AdoMet from the enzyme. The sequence is that of S-adenosylmethionine synthase from Ruegeria sp. (strain TM1040) (Silicibacter sp.).